Consider the following 241-residue polypeptide: Pyridoxine/pyridoxamine 5'-phosphate oxidase (241 aa).

Positions 1 to 35 (MASNPPSAASPRRTAVSPGADRPDGPDPAGQRQSY) are disordered. Substrate-binding positions include 32–35 (RQSY) and Lys92. FMN is bound by residues 87-92 (RTVLLK), 102-103 (YT), Arg108, Lys109, and Gln131. Positions 149, 153, and 157 each coordinate substrate. Residues 166 to 167 (QS) and Trp212 each bind FMN. Residue 218-220 (RLH) participates in substrate binding. Position 222 (Arg222) interacts with FMN.

This sequence belongs to the pyridoxamine 5'-phosphate oxidase family. In terms of assembly, homodimer. FMN serves as cofactor.

It catalyses the reaction pyridoxamine 5'-phosphate + O2 + H2O = pyridoxal 5'-phosphate + H2O2 + NH4(+). The enzyme catalyses pyridoxine 5'-phosphate + O2 = pyridoxal 5'-phosphate + H2O2. Its pathway is cofactor metabolism; pyridoxal 5'-phosphate salvage; pyridoxal 5'-phosphate from pyridoxamine 5'-phosphate: step 1/1. The protein operates within cofactor metabolism; pyridoxal 5'-phosphate salvage; pyridoxal 5'-phosphate from pyridoxine 5'-phosphate: step 1/1. Functionally, catalyzes the oxidation of either pyridoxine 5'-phosphate (PNP) or pyridoxamine 5'-phosphate (PMP) into pyridoxal 5'-phosphate (PLP). This Frankia alni (strain DSM 45986 / CECT 9034 / ACN14a) protein is Pyridoxine/pyridoxamine 5'-phosphate oxidase.